The following is a 122-amino-acid chain: MKQLGKHIILELWGCENQALDDQPGIEKMLVDAVKACGATLICVKTHKFSPQGVTGVAVLSESHISIHTWPELGYAAMDVFTCGEHVAPHDTIPEIQKFLKPEKIDVMDIKRGIIEVDEVKE.

The active-site Schiff-base intermediate with substrate; via pyruvic acid is S63. At S63 the chain carries Pyruvic acid (Ser); by autocatalysis. The active-site Proton acceptor; for processing activity is H68. C83 acts as the Proton donor; for catalytic activity in catalysis.

The protein belongs to the prokaryotic AdoMetDC family. Type 1 subfamily. As to quaternary structure, heterotetramer of two alpha and two beta chains arranged as a dimer of alpha/beta heterodimers. Pyruvate is required as a cofactor. Is synthesized initially as an inactive proenzyme. Formation of the active enzyme involves a self-maturation process in which the active site pyruvoyl group is generated from an internal serine residue via an autocatalytic post-translational modification. Two non-identical subunits are generated from the proenzyme in this reaction, and the pyruvate is formed at the N-terminus of the alpha chain, which is derived from the carboxyl end of the proenzyme. The post-translation cleavage follows an unusual pathway, termed non-hydrolytic serinolysis, in which the side chain hydroxyl group of the serine supplies its oxygen atom to form the C-terminus of the beta chain, while the remainder of the serine residue undergoes an oxidative deamination to produce ammonia and the pyruvoyl group blocking the N-terminus of the alpha chain.

The catalysed reaction is S-adenosyl-L-methionine + H(+) = S-adenosyl 3-(methylsulfanyl)propylamine + CO2. The protein operates within amine and polyamine biosynthesis; S-adenosylmethioninamine biosynthesis; S-adenosylmethioninamine from S-adenosyl-L-methionine: step 1/1. In terms of biological role, catalyzes the decarboxylation of S-adenosylmethionine to S-adenosylmethioninamine (dcAdoMet), the propylamine donor required for the synthesis of the polyamines spermine and spermidine from the diamine putrescine. This is S-adenosylmethionine decarboxylase proenzyme from Methanococcus maripaludis (strain C7 / ATCC BAA-1331).